The chain runs to 122 residues: Large ribosomal subunit protein uL14 (122 aa).

Belongs to the universal ribosomal protein uL14 family. As to quaternary structure, part of the 50S ribosomal subunit. Forms a cluster with proteins L3 and L19. In the 70S ribosome, L14 and L19 interact and together make contacts with the 16S rRNA in bridges B5 and B8.

Functionally, binds to 23S rRNA. Forms part of two intersubunit bridges in the 70S ribosome. In Solibacter usitatus (strain Ellin6076), this protein is Large ribosomal subunit protein uL14.